A 207-amino-acid chain; its full sequence is Thymidylate kinase (207 aa).

The interval 11–49 (EGIDGSGKSTQARRLAEHLRDTGRDPLLTREPGGSPGAE) is disordered. 12–19 (GIDGSGKS) provides a ligand contact to ATP. The segment covering 24-38 (RLAEHLRDTGRDPLL) has biased composition (basic and acidic residues).

It belongs to the thymidylate kinase family.

The enzyme catalyses dTMP + ATP = dTDP + ADP. Its function is as follows. Phosphorylation of dTMP to form dTDP in both de novo and salvage pathways of dTTP synthesis. This Dinoroseobacter shibae (strain DSM 16493 / NCIMB 14021 / DFL 12) protein is Thymidylate kinase.